We begin with the raw amino-acid sequence, 197 residues long: Peptide deformylase (197 aa).

Residues Cys106 and His148 each coordinate Fe cation. The active site involves Glu149. His152 contacts Fe cation.

The protein belongs to the polypeptide deformylase family. Fe(2+) is required as a cofactor.

It catalyses the reaction N-terminal N-formyl-L-methionyl-[peptide] + H2O = N-terminal L-methionyl-[peptide] + formate. In terms of biological role, removes the formyl group from the N-terminal Met of newly synthesized proteins. Requires at least a dipeptide for an efficient rate of reaction. N-terminal L-methionine is a prerequisite for activity but the enzyme has broad specificity at other positions. This is Peptide deformylase from Mycolicibacterium paratuberculosis (strain ATCC BAA-968 / K-10) (Mycobacterium paratuberculosis).